The primary structure comprises 233 residues: Small ribosomal subunit protein uS3 (233 aa).

Positions 39-107 (VRQFLMKTLE…PVQINISEVR (69 aa)) constitute a KH type-2 domain.

This sequence belongs to the universal ribosomal protein uS3 family. As to quaternary structure, part of the 30S ribosomal subunit. Forms a tight complex with proteins S10 and S14.

Its function is as follows. Binds the lower part of the 30S subunit head. Binds mRNA in the 70S ribosome, positioning it for translation. The chain is Small ribosomal subunit protein uS3 from Buchnera aphidicola subsp. Acyrthosiphon pisum (strain 5A).